Here is a 530-residue protein sequence, read N- to C-terminus: Glucose-6-phosphate isomerase (530 aa).

Catalysis depends on Glu356, which acts as the Proton donor. Catalysis depends on residues His387 and Lys502.

This sequence belongs to the GPI family.

The protein resides in the cytoplasm. It catalyses the reaction alpha-D-glucose 6-phosphate = beta-D-fructose 6-phosphate. The protein operates within carbohydrate biosynthesis; gluconeogenesis. It participates in carbohydrate degradation; glycolysis; D-glyceraldehyde 3-phosphate and glycerone phosphate from D-glucose: step 2/4. In terms of biological role, catalyzes the reversible isomerization of glucose-6-phosphate to fructose-6-phosphate. In Borrelia garinii subsp. bavariensis (strain ATCC BAA-2496 / DSM 23469 / PBi) (Borreliella bavariensis), this protein is Glucose-6-phosphate isomerase.